The following is a 166-amino-acid chain: Tegument protein UL55 homolog (166 aa).

The protein belongs to the alphaherpesvirinae HHV-1 UL55 family.

Its subcellular location is the virion tegument. The protein localises to the host nucleus matrix. This chain is Tegument protein UL55 homolog (MDV070), found in Gallid herpesvirus 2 (strain Chicken/Md5/ATCC VR-987) (GaHV-2).